A 501-amino-acid polypeptide reads, in one-letter code: G protein-activated inward rectifier potassium channel 1 (501 aa).

The segment at 1-40 is disordered; that stretch reads MSALRRKFGDDYQVVTTSSSGSGLQPQGPGQGPQQQLVPK. The Cytoplasmic portion of the chain corresponds to 1–80; it reads MSALRRKFGD…LFTTLVDLKW (80 aa). Positions 18–37 are enriched in low complexity; sequence SSSGSGLQPQGPGQGPQQQL. Residues 81–105 traverse the membrane as a helical segment; sequence RWNLFIFILTYTVAWLFMASMWWVI. Topologically, residues 106–129 are extracellular; it reads AYTRGDLNKAHVGNYTPCVANVYN. Residue Asn-119 is glycosylated (N-linked (GlcNAc...) asparagine). An intramembrane region (helical; Pore-forming) is located at residues 130–141; the sequence is FPSAFLFFIETE. The pore-forming intramembrane region spans 142-148; it reads ATIGYGY. A Selectivity filter motif is present at residues 143–148; the sequence is TIGYGY. The Extracellular portion of the chain corresponds to 149–157; that stretch reads RYITDKCPE. The helical transmembrane segment at 158–179 threads the bilayer; sequence GIILFLFQSILGSIVDAFLIGC. At 180–501 the chain is on the cytoplasmic side; sequence MFIKMSQPKK…LRKMNSDRFT (322 aa). Residues 182–209 form a polyphosphoinositide (PIP2)-binding region; that stretch reads IKMSQPKKRAETLMFSEHAVISMRDGKL. Phosphoserine is present on residues Ser-385 and Ser-424.

It belongs to the inward rectifier-type potassium channel (TC 1.A.2.1) family. KCNJ3 subfamily. As to quaternary structure, associates with KCNJ5/GIRK4 or KCNJ6/GIRK2 or KCNJ9/GIRK3 to form a G-protein activated heteromultimer pore-forming unit. The resulting inward current is much larger.

It is found in the membrane. It carries out the reaction K(+)(in) = K(+)(out). Its activity is regulated as follows. Heteromultimer composed of KCNJ3/GIRK1 and KCNJ5/GIRK4 is activated by phosphatidylinositol 4,5 biphosphate (PtdIns(4,5)P2). In terms of biological role, inward rectifier potassium channels are characterized by a greater tendency to allow potassium to flow into the cell rather than out of it. Their voltage dependence is regulated by the concentration of extracellular potassium; as external potassium is raised, the voltage range of the channel opening shifts to more positive voltages. The inward rectification is mainly due to the blockage of outward current by internal magnesium. This potassium channel is controlled by G proteins. This receptor plays a crucial role in regulating the heartbeat. The polypeptide is G protein-activated inward rectifier potassium channel 1 (KCNJ3) (Bos taurus (Bovine)).